A 148-amino-acid chain; its full sequence is Hut operon positive regulatory protein (148 aa).

The protein belongs to the HutP family. As to quaternary structure, homohexamer.

Its function is as follows. Antiterminator that binds to cis-acting regulatory sequences on the mRNA in the presence of histidine, thereby suppressing transcription termination and activating the hut operon for histidine utilization. The chain is Hut operon positive regulatory protein from Bacillus velezensis (strain DSM 23117 / BGSC 10A6 / LMG 26770 / FZB42) (Bacillus amyloliquefaciens subsp. plantarum).